A 660-amino-acid chain; its full sequence is Iron(3+)-hydroxamate import system permease protein FhuB (660 aa).

The next 18 membrane-spanning stretches (helical) occupy residues 5 to 25 (IALFPALLLALLVIVATALTW), 62 to 82 (LAISLLVGAGLGLVGVLFQQV), 93 to 113 (LGVATGAQLGITVTTLWAIPG), 118 to 138 (QFAAQAGACVVGLIVFGVAWG), 147 to 167 (ILAGLVVSLYCGAINQLLVIF), 197 to 217 (QLLGGVMLTLLLLRPLTLMGL), 240 to 260 (AIVISALLVNAVGIIGFIGLF), 277 to 297 (LMLASLIGALILWLSDQIILW), 303 to 323 (MEVSTGSVTALIGAPLLLWLL), 348 to 368 (LAFALAGGVLLLMAVVVALSF), 391 to 411 (WPRIMAALFAGVMLAVAGCII), 424 to 444 (VLGISSGAAFGVVLMLFLVPG), 447 to 467 (FGWLLPAGSLGAAVTLLIIMI), 479 to 499 (MLLAGMALSTAFTMLLMMLQA), 528 to 548 (GIVMVILLAITPLCRRWLTIL), 567 to 587 (IALLLLAACLTATATMTIGPL), 607 to 627 (MPHIVISALVGGLLLVFADWC), and 635 to 655 (FQIPAGLLSTFIGAPYFIYLL).

This sequence belongs to the binding-protein-dependent transport system permease family. FecCD subfamily. The complex is composed of two ATP-binding proteins (FhuC), a transmembrane protein (FhuB) and a solute-binding protein (FhuD). FhuB interacts with FhuC. FhuB interacts with FhuD. FhuB binds substrate-loaded FhuD more strongly than FhuD alone.

The protein resides in the cell inner membrane. Its function is as follows. Part of the ABC transporter complex FhuCDB involved in iron(3+)-hydroxamate import. Responsible for the translocation of the substrate across the membrane. The sequence is that of Iron(3+)-hydroxamate import system permease protein FhuB (fhuB) from Escherichia coli (strain K12).